Here is a 222-residue protein sequence, read N- to C-terminus: MDKTLINELGDELYQAMVQRETVTPLTSRGFDISVEDAYHISLRMLERRLAAGERVIGKKIGVTSKAVQNMLGVHQPDFGYLTDAMVYNSGEAMPISEKLIQPRAEGEIAFILKKDLMGPGVTNADVLAATECVIPCFEVVDSRIQDWKIKIQDTVADNASCGLFVLGDQAVSPRQVDLVTCGMLVEKNGQLLSTGAGAAALGSPVNCVAWLANTLGHFGIA.

The protein belongs to the hydratase/decarboxylase family.

It functions in the pathway aromatic compound metabolism; benzoate degradation via hydroxylation. Functionally, conversion of 2-hydroxypent-2,4-dienoate into 4-hydroxy-2-oxopentanoate. This Pseudomonas putida (Arthrobacter siderocapsulatus) protein is 2-hydroxypent-2,4-dienoate hydratase (xylJ).